The chain runs to 339 residues: Dihydroorotate dehydrogenase (quinone) (339 aa).

FMN is bound by residues 62–66 (AGLDK) and Thr-86. Lys-66 contacts substrate. Substrate is bound at residue 111-115 (NRMGF). FMN-binding residues include Asn-139 and Asn-172. Residue Asn-172 coordinates substrate. Residue Ser-175 is the Nucleophile of the active site. Residue Asn-177 participates in substrate binding. FMN is bound by residues Lys-217 and Thr-245. Position 246-247 (246-247 (NT)) interacts with substrate. Residues Gly-268, Gly-297, and 318-319 (YS) contribute to the FMN site.

The protein belongs to the dihydroorotate dehydrogenase family. Type 2 subfamily. In terms of assembly, monomer. FMN serves as cofactor.

It is found in the cell membrane. It carries out the reaction (S)-dihydroorotate + a quinone = orotate + a quinol. The protein operates within pyrimidine metabolism; UMP biosynthesis via de novo pathway; orotate from (S)-dihydroorotate (quinone route): step 1/1. In terms of biological role, catalyzes the conversion of dihydroorotate to orotate with quinone as electron acceptor. The chain is Dihydroorotate dehydrogenase (quinone) from Shewanella frigidimarina (strain NCIMB 400).